Consider the following 818-residue polypeptide: MGDILAHESELLGLVKEYLDFAEFEDTLKTFSKECKIKGKPLCKTVGGSFRDSKSLTIQKDLVAAFDNGDQKVFFDLWEEHISSSIRDGDSFAQKLEFYLHIHFAIYLLKYSVGRPDKEELDEKISYFKTYLETKGAALSQTTEFLPFYALPFVPNPMVHPSFKELFQDSWTPELKLKLIKFLALISKASNTPKLLTIYKENGQSNKEILQQLHQQLVEAERRSVTYLKRYNKIQADYHNLIGVTAELVDSLEATVSGKMITPEYLQSVCVRLFSNQMRQSLAHSVDFTRPGTASTMLRASLAPVKLKDVPLLPSLDYEKLKKDLILGSDRLKAFLLQALRWRLTTSHPGEQRETVLQAYISNDLLDCYSHNQRSVLQLLHSTSDVVRQYMARLINAFASLAEGRLYLAQNTKVLQMLEGRLKEEDKDIITRENVLGALQKFSLRRPLQTAMIQDGLIFWLVDVLKDPDCLSDYTLEYSVALLMNLCLRSTGKNMCAKVAGLVLKVLSDLLGHENHEIQPYVNGALYSILSVPSIREEARAMGMEDILRCFIKEGNAEMIRQIEFIIKQLNSEELPDGVLESDDDEDEDDEEDHDIMEADLDKDELIQPQLGELSGEKLLTTEYLGIMTNTGKTRRKGLANVQWSGDEPLQRPVTPGGHRNGYPVVEDQHTPPQTAQHARNGHPQALPAAHEAVYREGKPSTPESCVSSSSAIIAKPGEWLPRGRQEEPRPAPTGTPRQPREAPQDPGNGVTTRECASAFTCKPRAPCTPEMLDWNPPKAKASVLAPLFSSCGPQQASRPGSTASSTRGLPSSQSHRK.

A LisH domain is found at 7-39 (HESELLGLVKEYLDFAEFEDTLKTFSKECKIKG). Positions 204–230 (QSNKEILQQLHQQLVEAERRSVTYLKR) form a coiled coil. The residue at position 582 (Ser582) is a Phosphoserine. Disordered stretches follow at residues 642 to 755 (VQWS…TTRE) and 790 to 818 (SSCGPQQASRPGSTASSTRGLPSSQSHRK). Low complexity predominate over residues 701–711 (STPESCVSSSS). Polar residues predominate over residues 792-818 (CGPQQASRPGSTASSTRGLPSSQSHRK).

In terms of assembly, interacts with TOGARAM1, CCDC66, CEP104, CSPP1 and CEP290. Interacts with NDUFAF2. Strongly expressed in most melanomas and melanocytes. Weakly expressed in the testis.

The protein localises to the cytoplasm. It localises to the cytoskeleton. Its subcellular location is the cilium basal body. It is found in the cell projection. The protein resides in the cilium. The protein localises to the microtubule organizing center. It localises to the centrosome. Its subcellular location is the centriole. Its function is as follows. Involved in ciliogenesis. It is required for appropriate acetylation and polyglutamylation of ciliary microtubules, and regulation of cilium length. Acts as a positive regulator of hedgehog (Hh)signaling. May participate in the trafficking and/or retention of GLI2 and GLI3 proteins at the ciliary tip. The protein is LisH domain-containing protein ARMC9 of Homo sapiens (Human).